The chain runs to 522 residues: Zinc finger protein C25B8.19c (522 aa).

Disordered regions lie at residues 1 to 25, 61 to 96, 235 to 265, 311 to 386, and 413 to 462; these read MSSD…LPTT, DPQA…SNSN, QRQS…QEVT, QPSS…HTLS, and NSAQ…STSS. The segment covering 84–96 has biased composition (low complexity); the sequence is AGNTNTPTTSNSN. 2 stretches are compositionally biased toward polar residues: residues 311–321 and 335–344; these read QPSSRDLQNHP and ASNTLNHANG. The span at 345–362 shows a compositional bias: low complexity; the sequence is NQAENASESSTSQSNDSQ. Residues 413-427 are compositionally biased toward polar residues; sequence NSAQAHPMGQQSDSN. Basic and acidic residues predominate over residues 428-438; it reads YSDHHNNDKRA. The span at 453 to 462 shows a compositional bias: low complexity; it reads SHTGSSSTSS. 2 C2H2-type zinc fingers span residues 468–495 and 496–522; these read YRCT…GERP and FVCD…IHGL.

The protein resides in the nucleus. This Schizosaccharomyces pombe (strain 972 / ATCC 24843) (Fission yeast) protein is Zinc finger protein C25B8.19c.